Here is a 263-residue protein sequence, read N- to C-terminus: Endonuclease 8 (263 aa).

The active-site Schiff-base intermediate with DNA is the P2. E3 acts as the Proton donor in catalysis. Residue K53 is the Proton donor; for beta-elimination activity of the active site. DNA-binding residues include Q70, R125, and N169. An FPG-type zinc finger spans residues 229–263 (KVFHRDGELCERCGGIIEKTTLSSRPFYWCPGCQH). R253 functions as the Proton donor; for delta-elimination activity in the catalytic mechanism.

This sequence belongs to the FPG family. It depends on Zn(2+) as a cofactor.

The catalysed reaction is 2'-deoxyribonucleotide-(2'-deoxyribose 5'-phosphate)-2'-deoxyribonucleotide-DNA = a 3'-end 2'-deoxyribonucleotide-(2,3-dehydro-2,3-deoxyribose 5'-phosphate)-DNA + a 5'-end 5'-phospho-2'-deoxyribonucleoside-DNA + H(+). Functionally, involved in base excision repair of DNA damaged by oxidation or by mutagenic agents. Acts as a DNA glycosylase that recognizes and removes damaged bases. Has a preference for oxidized pyrimidines, such as thymine glycol, 5,6-dihydrouracil and 5,6-dihydrothymine. Has AP (apurinic/apyrimidinic) lyase activity and introduces nicks in the DNA strand. Cleaves the DNA backbone by beta-delta elimination to generate a single-strand break at the site of the removed base with both 3'- and 5'-phosphates. In Escherichia coli (strain SE11), this protein is Endonuclease 8.